A 409-amino-acid polypeptide reads, in one-letter code: Mitochondrial inner membrane protein oxa1-2 (409 aa).

The helical transmembrane segment at 76 to 96 (VVYTPSLPLSSSVLASFSFLP) threads the bilayer. At 97 to 114 (HNILQNGLNTLHIWSGLP) the chain is on the mitochondrial intermembrane side. A helical transmembrane segment spans residues 115–135 (WWASIAACAVAMRIAVFPIML). Over 136–188 (KMMKTSAKLAIINPKVAEHMSVLSKAKAEGNSELMMQATTQIQNLYKVNNVNP) the chain is Mitochondrial matrix. Residues 189–209 (LNLLSAPVFQGILFISFFYAL) form a helical membrane-spanning segment. At 210–235 (KTMAGVPVEGFTDGGFWWVNDLSQPD) the chain is on the mitochondrial intermembrane side. Residues 236 to 256 (PLHIFPVANGLLMLLNIELGS) traverse the membrane as a helical segment. Residues 257–275 (ETGSNKVAMSPSMKKFFRF) are Mitochondrial matrix-facing. Residues 276-296 (LCLASPLFTMNFPMAIFMYWF) traverse the membrane as a helical segment. Residues 297-409 (PSNVFSVFQG…SVTKPTEKKD (113 aa)) are Mitochondrial intermembrane-facing. The tract at residues 369–409 (TDTNNEQKPTNNSTITKATTLSDNSQNDKSSSVTKPTEKKD) is disordered. Residues 374–403 (EQKPTNNSTITKATTLSDNSQNDKSSSVTK) are compositionally biased toward polar residues.

The protein belongs to the OXA1/ALB3/YidC family.

It is found in the mitochondrion inner membrane. Functionally, required for the insertion of integral membrane proteins into the mitochondrial inner membrane. Essential for the activity and assembly of cytochrome c oxidase. It is essential for viability while oxa101 is not. When both are deleted the cell is non-viable, suggesting that oxa101 act as a back-up for oxa102. The sequence is that of Mitochondrial inner membrane protein oxa1-2 (oxa102) from Schizosaccharomyces pombe (strain 972 / ATCC 24843) (Fission yeast).